The chain runs to 122 residues: Large ribosomal subunit protein uL14 (122 aa).

This sequence belongs to the universal ribosomal protein uL14 family. In terms of assembly, part of the 50S ribosomal subunit. Forms a cluster with proteins L3 and L19. In the 70S ribosome, L14 and L19 interact and together make contacts with the 16S rRNA in bridges B5 and B8.

Binds to 23S rRNA. Forms part of two intersubunit bridges in the 70S ribosome. The chain is Large ribosomal subunit protein uL14 from Thermosipho africanus (strain TCF52B).